The chain runs to 451 residues: Signal transduction histidine-protein kinase ArlS (451 aa).

2 helical membrane passes run 11–31 (IIVT…IIIF) and 156–176 (IIAL…SYVF). The 54-residue stretch at 178 to 231 (TQITKPLVSLSNKMIEIRRDGFQNKLQLNTNYEEIDNLANTFNEMMSQIEESFN) folds into the HAMP domain. The 213-residue stretch at 239–451 (DASHELRTPL…NKGTTFKIIF (213 aa)) folds into the Histidine kinase domain. His-242 is modified (phosphohistidine; by autocatalysis).

Post-translationally, autophosphorylated.

It is found in the cell membrane. The enzyme catalyses ATP + protein L-histidine = ADP + protein N-phospho-L-histidine.. Functionally, member of the two-component regulatory system ArlS/ArlR involved in the regulation of adhesion, autolysis, multidrug resistance and virulence. ArlS probably functions as a sensor protein kinase which is autophosphorylated at a histidine residue and transfers its phosphate group to ArlR. This chain is Signal transduction histidine-protein kinase ArlS (arlS), found in Staphylococcus aureus (strain bovine RF122 / ET3-1).